Here is a 310-residue protein sequence, read N- to C-terminus: Solute carrier family 25 member 47 (310 aa).

3 Solcar repeats span residues 1–80 (MDFV…CLAH), 93–208 (PTKA…LCEW), and 217–304 (PDVL…VLRL). A run of 6 helical transmembrane segments spans residues 3–23 (FVAG…LDTV), 55–75 (GLSL…GTYH), 98–114 (ITLS…FLTS), 194–210 (SFAT…EWLT), 219–239 (VLGV…VATP), and 280–298 (LALN…FVAY).

The protein belongs to the mitochondrial carrier (TC 2.A.29) family. Specifically expressed in liver (at protein level).

It is found in the mitochondrion inner membrane. The protein resides in the mitochondrion outer membrane. The enzyme catalyses NAD(+)(in) = NAD(+)(out). The catalysed reaction is acetyl-CoA(in) = acetyl-CoA(out). Its function is as follows. Mitochondrial NAD(+) transporter that acts as a 'metabolic gate' in hepatic lipogenesis. Provides NAD(+) substrate to mitochondrial SIRT3 deacetylase and enables its NAD(+)-dependent activities in mitochondrial energy metabolism. This triggers downstream activation of PRKAA1/AMPK-alpha signaling cascade that negatively regulates sterol regulatory element-binding protein (SREBP) transcriptional activities and ATP-consuming lipogenesis to restore cellular energy balance. May transport other mitochondrial metabolites having an aromatic nucleotide and phosphate groups, such as acetyl-CoA. Does not transport amino acids. The transport mechanism remains to be elucidated. The polypeptide is Solute carrier family 25 member 47 (Mus musculus (Mouse)).